A 658-amino-acid polypeptide reads, in one-letter code: Transmembrane 9 superfamily member 11 (658 aa).

The N-terminal stretch at 1–23 (MRSMDRFGIWVLAILLVIQSSFG) is a signal peptide. The Lumenal segment spans residues 24–291 (FYLPGSYPHK…LKMEGSKVHW (268 aa)). Residues 292-312 (FSILNSLMVITFLAGIVLVIF) traverse the membrane as a helical segment. The Cytoplasmic portion of the chain corresponds to 313–364 (LRTVRRDLTRYEELDKEAQAQMNEELSGWKLVVGDVFRAPSNASLLCVMVGD). A helical membrane pass occupies residues 365–385 (GVQILGMAVVTILFAALGFMS). The Lumenal portion of the chain corresponds to 386-391 (PASRGT). Residues 392-412 (LITGMLFFYMILGIAAGYVSV) form a helical membrane-spanning segment. Topologically, residues 413-432 (RLWRTIGCGEHRGWMSVAWK) are cytoplasmic. A helical membrane pass occupies residues 433–453 (AACFFPGIAFLILTTLNFLLW). Over 454–462 (GSHSTGAIP) the chain is Lumenal. A helical transmembrane segment spans residues 463–483 (FSLFVILLLLWFCISVPLTLI). Over 484–515 (GGYFGAKAPHIEFPVRTNQIPREIPAQKYPSW) the chain is Cytoplasmic. A helical membrane pass occupies residues 516–536 (LLVLGAGTLPFGTLFIELFFI). Topologically, residues 537–547 (MSSIWMGRVYY) are lumenal. The helical transmembrane segment at 548-568 (VFGFLFVVLILLVVVCAEVSL) threads the bilayer. Residues 569–586 (VLTYMHLCVEDYKWWWKS) are Cytoplasmic-facing. The chain crosses the membrane as a helical span at residues 587-607 (FFASGSVAIYIFIYSINYLVF). Residues 608–619 (DLKSLSGPVSAT) are Lumenal-facing. Residues 620–640 (LYLGYSLFMVLAIMLATGTVG) form a helical membrane-spanning segment. Topologically, residues 641 to 658 (FLSSFWFVHYLFSSVKLD) are cytoplasmic. Positions 647–652 (FVHYLF) match the Endoplasmic reticulum export signal motif. Positions 656 to 658 (KLD) match the Golgi retention signal motif.

This sequence belongs to the nonaspanin (TM9SF) (TC 9.A.2) family.

It localises to the endosome membrane. The protein resides in the golgi apparatus membrane. This chain is Transmembrane 9 superfamily member 11, found in Arabidopsis thaliana (Mouse-ear cress).